The primary structure comprises 92 residues: Small ribosomal subunit protein uS19c (92 aa).

This sequence belongs to the universal ribosomal protein uS19 family.

It localises to the plastid. It is found in the chloroplast. Its function is as follows. Protein S19 forms a complex with S13 that binds strongly to the 16S ribosomal RNA. The chain is Small ribosomal subunit protein uS19c from Piper cenocladum (Ant piper).